Consider the following 106-residue polypeptide: Cytochrome c3 (106 aa).

Residues His-26, His-29, Cys-34, Cys-37, His-38, His-39, Cys-50, Cys-55, His-56, His-75, Cys-82, Cys-85, His-86, Cys-98, Cys-101, and His-102 each contribute to the heme c site.

Post-translationally, binds 4 heme c groups per subunit.

In terms of biological role, participates in sulfate respiration coupled with phosphorylation by transferring electrons from the enzyme dehydrogenase to ferredoxin. The sequence is that of Cytochrome c3 from Maridesulfovibrio salexigens (Desulfovibrio salexigens).